The chain runs to 388 residues: MKKTTEGAFYTREYRNLFKEFGYSEAEIQERVKDTWEQLFGDNPETKIYYEVGDDLGYLLDTGNLDVRTEGMSYGMMMAVQMDRKDIFDRIWNWTMKNMYMTEGVHAGYFAWSCQPDGTKNSWGPAPDGEEYFALALFFASHRWGDGDEQPFNYSEQARKLLHTCVHNGEGGPGHPMWNRDNKLIKFIPEVEFSDPSYHLPHFYELFSLWANEEDRVFWKEAAEASREYLKIACHPETGLAPEYAYYDGTPNDEKGYGHFFSDSYRVAANIGLDAEWFGGSEWSAEEINKIQAFFADKEPEDYRRYKIDGEPFEEKSLHPVGLIATNAMGSLASVDGPYAKANVDLFWNTPVRTGNRRYYDNCLYLFAMLALSGNFKIWFPEGQEEEH.

The active-site Proton donor is Glu-70. Residue Asp-263 is the Proton acceptor of the active site.

This sequence belongs to the glycosyl hydrolase 8 (cellulase D) family.

It catalyses the reaction Hydrolysis of (1-&gt;4)-beta-D-xylose residues from the reducing end of oligosaccharides.. Functionally, hydrolyzes xylooligosaccharides with a degree of polymerization of greater than or equal to 3, releasing xylose from the reducing end. Only hydrolyzes the beta anomers of xylooligosaccharides, with inversion of anomeric configuration. Hydrolyzes the glucose and xylose-based trisaccharides where xylose is located at the -1 subsite, GXX, XXG and GXG. Does not hydrolyze xylan, chitosan, lichenan, curdlan or carboxymethylcellulose. The protein is Reducing end xylose-releasing exo-oligoxylanase of Halalkalibacterium halodurans (strain ATCC BAA-125 / DSM 18197 / FERM 7344 / JCM 9153 / C-125) (Bacillus halodurans).